The following is a 392-amino-acid chain: Probable tRNA pseudouridine synthase D 1 (392 aa).

Aspartate 92 (nucleophile) is an active-site residue. Residues 167–354 (YFLNYYGVQR…FIGDRRAMIG (188 aa)) enclose the TRUD domain.

It belongs to the pseudouridine synthase TruD family.

The catalysed reaction is uridine(13) in tRNA = pseudouridine(13) in tRNA. Its function is as follows. Could be responsible for synthesis of pseudouridine from uracil-13 in transfer RNAs. This is Probable tRNA pseudouridine synthase D 1 from Methanocaldococcus jannaschii (strain ATCC 43067 / DSM 2661 / JAL-1 / JCM 10045 / NBRC 100440) (Methanococcus jannaschii).